We begin with the raw amino-acid sequence, 715 residues long: DNA ligase (715 aa).

Residues 47–51, 96–97, and glutamate 128 each bind NAD(+); these read DADYD and SL. Catalysis depends on lysine 130, which acts as the N6-AMP-lysine intermediate. 4 residues coordinate NAD(+): arginine 151, glutamate 188, lysine 306, and lysine 330. Zn(2+)-binding residues include cysteine 435, cysteine 438, cysteine 453, and cysteine 459. Positions 637-715 constitute a BRCT domain; that stretch reads RRDTAVAGKT…EDEWLALIGN (79 aa).

It belongs to the NAD-dependent DNA ligase family. LigA subfamily. It depends on Mg(2+) as a cofactor. Mn(2+) is required as a cofactor.

It carries out the reaction NAD(+) + (deoxyribonucleotide)n-3'-hydroxyl + 5'-phospho-(deoxyribonucleotide)m = (deoxyribonucleotide)n+m + AMP + beta-nicotinamide D-nucleotide.. Functionally, DNA ligase that catalyzes the formation of phosphodiester linkages between 5'-phosphoryl and 3'-hydroxyl groups in double-stranded DNA using NAD as a coenzyme and as the energy source for the reaction. It is essential for DNA replication and repair of damaged DNA. The polypeptide is DNA ligase (Rhodopseudomonas palustris (strain TIE-1)).